An 828-amino-acid polypeptide reads, in one-letter code: MKLSRRHFMKANAVAAAAAVAGITIPIAVRAATEQSEAIHWDKAPCRFCGVGCGVLVGTQNGRIVASQGDPDAPVNRGLNCIKGYFLPKIMYGQDRLTQPLLRMRDGKFDKEGEFTPISWDKAFDIMAEKFKTALKEKGPNAIGMFGSGQSTIWEGYAAAKLFKAGFRSNNIDPNARHCMASAVVGFMRTFGMDEPMGCYDDIEQTDAFVLWGSNMAEMHPILWSRITDRRLSNSNVTVAVLSTYQHRSFELADNGMVFTPQTDLAILNYIANYIIQNNAVNEAFFTRHVNLRRGVTDIGYGLRPTHPLEKAAKNPGSDASEPMSFEEYKAFVADYTLEKTVAISGVPADQLEALAKLYADPKKKVISYWTMGFNQHTRGVWANNLVYNIHLLTGKISQPGCGPFSLTGQPSACGTAREVGTFAHRLPADMVVTNEKHRAIAEKLWQLPTGTIPEKIGLHAVAQDRALKDGTLNAYWVMCNNNMQAGPNINQERMPGWRDPRNFIVVSDPYPTVSALAADLILPTAMWVEKEGAYGNAERRTQFWRQQVKAPGESKSDLWQVVSFAKRFAVEEVWPEELLAQKPAYRGKTLYDVLFANDVTTRFPLSELAENQLNDESRDFGFYLQKGLFEEYAAFGRGHGHDLAPFDDYHKARGLRWPVVNGKETQWRYSEGHDPYVKAGEAYRFYGKPDGKAVIFALPYEPAAEAPDDEYDLWLSTGRVLEHWHTGSMTRRVPELHRAFPEAVLFIHPQDAKARDLRRGEKVRIISRRGEVVSVVETRGRNKPPRGLVYMPFFDAAQMTNVLTLDATDPLSKETDFKKCAVKLAKV.

Residues Met-1 to Ala-31 constitute a signal peptide (tat-type signal). In terms of domain architecture, 4Fe-4S Mo/W bis-MGD-type spans Ile-39–Asp-95. Residues Cys-46, Cys-49, Cys-53, and Cys-81 each coordinate [4Fe-4S] cluster. Residues Lys-83, Gln-150, Asn-175, Cys-179, Trp-212–Met-219, Ser-243–His-247, Gln-262–Asp-264, Met-372, Gln-376, Asn-482, Ser-508–Asp-509, Lys-531, Asp-558, and Thr-718–Thr-727 contribute to the Mo-bis(molybdopterin guanine dinucleotide) site. Phe-794 serves as a coordination point for substrate. Mo-bis(molybdopterin guanine dinucleotide)-binding residues include Asn-802 and Lys-819.

This sequence belongs to the prokaryotic molybdopterin-containing oxidoreductase family. NasA/NapA/NarB subfamily. Component of the periplasmic nitrate reductase NapAB complex composed of NapA and NapB. [4Fe-4S] cluster serves as cofactor. It depends on Mo-bis(molybdopterin guanine dinucleotide) as a cofactor. Predicted to be exported by the Tat system. The position of the signal peptide cleavage has not been experimentally proven.

The protein resides in the periplasm. The catalysed reaction is 2 Fe(II)-[cytochrome] + nitrate + 2 H(+) = 2 Fe(III)-[cytochrome] + nitrite + H2O. In terms of biological role, catalytic subunit of the periplasmic nitrate reductase complex NapAB. Receives electrons from NapB and catalyzes the reduction of nitrate to nitrite. This Pectobacterium carotovorum subsp. carotovorum (strain PC1) protein is Periplasmic nitrate reductase.